Reading from the N-terminus, the 565-residue chain is E3 ubiquitin-protein ligase RNF168 (565 aa).

The RING-type zinc-finger motif lies at 16-55 (CGICMEILLEPVTLPCNHTLCNPCFQSTVEKANLCCPFCR). S70 is subject to Phosphoserine. Residues 110 to 128 (LSEPGELRREYEEEISRVE) carry the LR motif 1 motif. The residue at position 134 (S134) is a Phosphoserine. Positions 143-151 (EEYIQRLLA) match the UMI motif motif. Disordered stretches follow at residues 150–223 (LAEE…KTFG) and 252–302 (SKET…PQLC). The span at 157 to 179 (EKRQREKRRSEMEEQLRGDEELA) shows a compositional bias: basic and acidic residues. An MIU motif 1 motif is present at residues 168–191 (MEEQLRGDEELARSLSTSINSNYE). Polar residues predominate over residues 181-201 (SLSTSINSNYERNTLASPLSS). S197 is subject to Phosphoserine. Residue K210 forms a Glycyl lysine isopeptide (Lys-Gly) (interchain with G-Cter in SUMO2) linkage. Residues 275–293 (PTLSPQTCLETQEQGSESS) show a composition bias toward polar residues. Phosphoserine occurs at positions 413 and 414. An MIU motif 2 motif is present at residues 438–461 (RHKQEEQDRLLALQLQKEVDKEQM). The disordered stretch occupies residues 458 to 521 (KEQMVPNRQK…TKGDYWEPFK (64 aa)). The LR motif 2 motif lies at 465-476 (RQKGSPDQYQLR). Over residues 466-477 (QKGSPDQYQLRT) the composition is skewed to polar residues. S469 is modified (phosphoserine). Over residues 504 to 518 (DHSKSPRNTKGDYWE) the composition is skewed to basic and acidic residues. K525 participates in a covalent cross-link: Glycyl lysine isopeptide (Lys-Gly) (interchain with G-Cter in SUMO2).

It belongs to the RNF168 family. In terms of assembly, monomer. Interacts with UBE2N/UBC13. In terms of processing, sumoylated with SUMO1 by PIAS4 in response to double-strand breaks (DSBs). Post-translationally, ubiquitinated.

The protein resides in the nucleus. The catalysed reaction is S-ubiquitinyl-[E2 ubiquitin-conjugating enzyme]-L-cysteine + [acceptor protein]-L-lysine = [E2 ubiquitin-conjugating enzyme]-L-cysteine + N(6)-ubiquitinyl-[acceptor protein]-L-lysine.. It participates in protein modification; protein ubiquitination. Functionally, E3 ubiquitin-protein ligase required for accumulation of repair proteins to sites of DNA damage. Acts with UBE2N/UBC13 to amplify the RNF8-dependent histone ubiquitination. Recruited to sites of DNA damage at double-strand breaks (DSBs) by binding to ubiquitinated histone H2A and H2AX and amplifies the RNF8-dependent H2A ubiquitination, promoting the formation of 'Lys-63'-linked ubiquitin conjugates. This leads to concentrate ubiquitinated histones H2A and H2AX at DNA lesions to the threshold required for recruitment of TP53BP1 and BRCA1. Also recruited at DNA interstrand cross-links (ICLs) sites and promotes accumulation of 'Lys-63'-linked ubiquitination of histones H2A and H2AX, leading to recruitment of FAAP20 and Fanconi anemia (FA) complex, followed by interstrand cross-link repair. H2A ubiquitination also mediates the ATM-dependent transcriptional silencing at regions flanking DSBs in cis, a mechanism to avoid collision between transcription and repair intermediates. Also involved in class switch recombination in immune system, via its role in regulation of DSBs repair. Following DNA damage, promotes the ubiquitination and degradation of JMJD2A/KDM4A in collaboration with RNF8, leading to unmask H4K20me2 mark and promote the recruitment of TP53BP1 at DNA damage sites. Not able to initiate 'Lys-63'-linked ubiquitination in vitro; possibly due to partial occlusion of the UBE2N/UBC13-binding region. Catalyzes monoubiquitination of 'Lys-13' and 'Lys-15' of nucleosomal histone H2A (H2AK13Ub and H2AK15Ub, respectively). This Mus musculus (Mouse) protein is E3 ubiquitin-protein ligase RNF168.